The chain runs to 173 residues: Xanthine-guanine phosphoribosyltransferase (173 aa).

5-phospho-alpha-D-ribose 1-diphosphate contacts are provided by residues 48–49 (RG) and 107–115 (DDLVDTGKT). Asp-108 contacts Mg(2+). Guanine contacts are provided by Asp-111 and Ile-154. Asp-111 and Ile-154 together coordinate xanthine. GMP contacts are provided by residues 111–115 (DTGKT) and 153–154 (WI).

This sequence belongs to the purine/pyrimidine phosphoribosyltransferase family. XGPT subfamily. As to quaternary structure, homotetramer. It depends on Mg(2+) as a cofactor.

It localises to the cell inner membrane. It carries out the reaction GMP + diphosphate = guanine + 5-phospho-alpha-D-ribose 1-diphosphate. The catalysed reaction is XMP + diphosphate = xanthine + 5-phospho-alpha-D-ribose 1-diphosphate. It catalyses the reaction IMP + diphosphate = hypoxanthine + 5-phospho-alpha-D-ribose 1-diphosphate. It participates in purine metabolism; GMP biosynthesis via salvage pathway; GMP from guanine: step 1/1. Its pathway is purine metabolism; XMP biosynthesis via salvage pathway; XMP from xanthine: step 1/1. Functionally, purine salvage pathway enzyme that catalyzes the transfer of the ribosyl-5-phosphate group from 5-phospho-alpha-D-ribose 1-diphosphate (PRPP) to the N9 position of the 6-oxopurines guanine and xanthine to form the corresponding ribonucleotides GMP (guanosine 5'-monophosphate) and XMP (xanthosine 5'-monophosphate), with the release of PPi. To a lesser extent, also acts on hypoxanthine. This chain is Xanthine-guanine phosphoribosyltransferase, found in Rhodopseudomonas palustris (strain ATCC BAA-98 / CGA009).